We begin with the raw amino-acid sequence, 272 residues long: HMP-PP phosphatase (272 aa).

The active-site Nucleophile is the aspartate 8. Aspartate 8, aspartate 10, and aspartate 212 together coordinate Mg(2+).

Belongs to the HAD-like hydrolase superfamily. Cof family. The cofactor is Mg(2+).

The catalysed reaction is 4-amino-2-methyl-5-(diphosphooxymethyl)pyrimidine + H2O = 4-amino-2-methyl-5-(phosphooxymethyl)pyrimidine + phosphate + H(+). Functionally, catalyzes the hydrolysis of 4-amino-2-methyl-5-hydroxymethylpyrimidine pyrophosphate (HMP-PP) to 4-amino-2-methyl-5-hydroxymethylpyrimidine phosphate (HMP-P). This is HMP-PP phosphatase from Salmonella newport (strain SL254).